Here is a 534-residue protein sequence, read N- to C-terminus: 5'-nucleotidase domain-containing protein 3 (534 aa).

Residue Asp104 is the Nucleophile of the active site. Asp104 and Asp106 together coordinate Mg(2+). Asp106 serves as the catalytic Proton donor. 234 to 242 (KEAIRDVHV) lines the substrate pocket. A Mg(2+)-binding site is contributed by Asp372.

Belongs to the 5'(3')-deoxyribonucleotidase family. Mg(2+) serves as cofactor.

The chain is 5'-nucleotidase domain-containing protein 3 (nt5dc3) from Xenopus tropicalis (Western clawed frog).